We begin with the raw amino-acid sequence, 392 residues long: Protein trapped in endoderm-1 (392 aa).

Residues 1–39 (MDQDMGMATGYFQDADMQMDEPAAATQSIYPHSATLFAA) lie on the Extracellular side of the membrane. A helical membrane pass occupies residues 40-60 (ISACVFVTIGVLGNLITLLAL). The Cytoplasmic segment spans residues 61-73 (LKSPTIREHATTA). The chain crosses the membrane as a helical span at residues 74–94 (FVISLSISDLLFCSFSLPLTA). Residues 95–110 (VRFFQESWTFGTTLCK) lie on the Extracellular side of the membrane. The chain crosses the membrane as a helical span at residues 111-131 (IFPVIFYGNVAVSLLSMVGIT). Residues 132–156 (LNRYILIACHSRYSQIYKPKFITLQ) lie on the Cytoplasmic side of the membrane. A helical transmembrane segment spans residues 157–177 (LLFVWAVSFLLLLPPILGIWG). Topologically, residues 178-202 (EMGLDEATFSCTILKKEGRSIKKTL) are extracellular. Residues 203-223 (FVIGFLLPCLVIIVSYSCIYI) form a helical membrane-spanning segment. The Cytoplasmic portion of the chain corresponds to 224–268 (TVLHQKKKIRNHDNFQIAAAKGSSSSGGGSYMTTTCTRKAREDNR). The helical transmembrane segment at 269 to 289 (LTVMMVTIFLCFLVCFLPLML) threads the bilayer. Topologically, residues 290 to 302 (ANVVDDERNTSYP) are extracellular. N298 carries N-linked (GlcNAc...) asparagine glycosylation. The chain crosses the membrane as a helical span at residues 303-323 (WLHIIASVMAWASSVINPIIY). Over 324 to 392 (AASNRNYRVA…INQMCQTYSV (69 aa)) the chain is Cytoplasmic. S359, S362, and S366 each carry phosphoserine. At T372 the chain carries Phosphothreonine.

This sequence belongs to the G-protein coupled receptor 1 family. In embryos, expression is seen at highest levels in the cuprophilic cells and at lower levels in the amnioserosa, developing CNS, cardiac mesoderm primordium and midline glia.

The protein localises to the cell membrane. Its function is as follows. Essential for the first active step of germ cell migration: transepithelial migration of germ cells through the posterior midgut (PMG) epithelium. The protein is Protein trapped in endoderm-1 (Tre1) of Drosophila melanogaster (Fruit fly).